Reading from the N-terminus, the 333-residue chain is Anthranilate phosphoribosyltransferase (333 aa).

5-phospho-alpha-D-ribose 1-diphosphate contacts are provided by residues Gly-80, 83–84 (GD), Thr-88, 90–93 (NLST), 108–116 (KHGNRSASG), and Ser-120. Gly-80 provides a ligand contact to anthranilate. Ser-92 is a Mg(2+) binding site. Residue Asn-111 coordinates anthranilate. Arg-166 is a binding site for anthranilate. The Mg(2+) site is built by Asp-224 and Glu-225.

The protein belongs to the anthranilate phosphoribosyltransferase family. As to quaternary structure, homodimer. It depends on Mg(2+) as a cofactor.

The enzyme catalyses N-(5-phospho-beta-D-ribosyl)anthranilate + diphosphate = 5-phospho-alpha-D-ribose 1-diphosphate + anthranilate. Its pathway is amino-acid biosynthesis; L-tryptophan biosynthesis; L-tryptophan from chorismate: step 2/5. In terms of biological role, catalyzes the transfer of the phosphoribosyl group of 5-phosphorylribose-1-pyrophosphate (PRPP) to anthranilate to yield N-(5'-phosphoribosyl)-anthranilate (PRA). The chain is Anthranilate phosphoribosyltransferase from Pyrobaculum arsenaticum (strain DSM 13514 / JCM 11321 / PZ6).